The primary structure comprises 628 residues: Chaperone protein HtpG (628 aa).

The interval 1-340 is a; substrate-binding; that stretch reads MSTETLQKET…SADLPLNVSR (340 aa). The tract at residues 341–557 is b; sequence EILQHSKDIE…EHDLSGNLER (217 aa). The c stretch occupies residues 558–628; sequence LLKAAGQKTP…FVRRVNAMLA (71 aa).

The protein belongs to the heat shock protein 90 family. As to quaternary structure, homodimer.

The protein resides in the cytoplasm. In terms of biological role, molecular chaperone. Has ATPase activity. The polypeptide is Chaperone protein HtpG (Methylobacillus flagellatus (strain ATCC 51484 / DSM 6875 / VKM B-1610 / KT)).